The chain runs to 217 residues: Protein-L-isoaspartate O-methyltransferase (217 aa).

Residue Ser65 is part of the active site.

It belongs to the methyltransferase superfamily. L-isoaspartyl/D-aspartyl protein methyltransferase family.

Its subcellular location is the cytoplasm. It catalyses the reaction [protein]-L-isoaspartate + S-adenosyl-L-methionine = [protein]-L-isoaspartate alpha-methyl ester + S-adenosyl-L-homocysteine. In terms of biological role, catalyzes the methyl esterification of L-isoaspartyl residues in peptides and proteins that result from spontaneous decomposition of normal L-aspartyl and L-asparaginyl residues. It plays a role in the repair and/or degradation of damaged proteins. The chain is Protein-L-isoaspartate O-methyltransferase from Chlorobium limicola (strain DSM 245 / NBRC 103803 / 6330).